A 396-amino-acid chain; its full sequence is S-adenosylmethionine synthase (396 aa).

H16 serves as a coordination point for ATP. D18 serves as a coordination point for Mg(2+). Residue E44 participates in K(+) binding. E57 and Q100 together coordinate L-methionine. The interval 100–110 is flexible loop; that stretch reads QSPDIAQGVDR. ATP is bound by residues 167–169, 233–234, D242, 248–249, A265, and K269; these read DAK, RF, and RK. D242 is a binding site for L-methionine. K273 is a binding site for L-methionine.

This sequence belongs to the AdoMet synthase family. As to quaternary structure, homotetramer; dimer of dimers. Requires Mg(2+) as cofactor. The cofactor is K(+).

The protein resides in the cytoplasm. The catalysed reaction is L-methionine + ATP + H2O = S-adenosyl-L-methionine + phosphate + diphosphate. The protein operates within amino-acid biosynthesis; S-adenosyl-L-methionine biosynthesis; S-adenosyl-L-methionine from L-methionine: step 1/1. Catalyzes the formation of S-adenosylmethionine (AdoMet) from methionine and ATP. The overall synthetic reaction is composed of two sequential steps, AdoMet formation and the subsequent tripolyphosphate hydrolysis which occurs prior to release of AdoMet from the enzyme. This Paraburkholderia phytofirmans (strain DSM 17436 / LMG 22146 / PsJN) (Burkholderia phytofirmans) protein is S-adenosylmethionine synthase.